Here is a 174-residue protein sequence, read N- to C-terminus: MNTMNSVLQCKELALYGGSFDPLHKAHLAIIDQTLELLPFVKLIVLPAYQNPFKKPCFLDVQTRFKELERALRGIDRVLLSDFEIKQERAVPTIESVIYFQKLYCPKTLYLVIGADCLRHLSSWTNAKELLKRVELVVFERIGYEEIQFKGRYFPLKGIDAPISSSAIRASLGV.

The protein belongs to the NadD family.

It carries out the reaction nicotinate beta-D-ribonucleotide + ATP + H(+) = deamido-NAD(+) + diphosphate. It participates in cofactor biosynthesis; NAD(+) biosynthesis; deamido-NAD(+) from nicotinate D-ribonucleotide: step 1/1. Catalyzes the reversible adenylation of nicotinate mononucleotide (NaMN) to nicotinic acid adenine dinucleotide (NaAD). This Helicobacter pylori (strain HPAG1) protein is Probable nicotinate-nucleotide adenylyltransferase.